Here is a 541-residue protein sequence, read N- to C-terminus: MAKEIKFAEDARAAMLRGVDVLADTVKVTLGPKGRNVVLEKSFGSPLITNDGVTIAKEIELEDHFENMGAKLVSEVASKTNDIAGDGTTTATVLTQAIVREGLKNVTAGANPLGIRRGIELATKTAVEELHNISSVVDSKEAIAQVAAVSSGSEKVGQLIADAMEKVGNDGVITIEESKGIETELDVVEGMQFDRGYLSQYMVTDNDKMEAVLENPYILITDKKISNIQDILPLLEQILQQSRPLLIIADDVDGEALPTLVLNKIRGTFNVVAVKAPGFGDRRKAMLEDIAILTGGTVITDDLGLELKDTTIENLGNASKVVVDKDNTTIVEGAGSKEAIDARVHLIKNQIGETTSDFDREKLQERLAKLAGGVAVVKVGAATETELKELKLRIEDALNATRAAVEEGMVSGGGTALVNVIGKVAALEAEGDVATGIKIVVRALEEPIRQIAENAGYEGSVIVDKLKNVDLGIGFNAANGEWVNMVEAGIVDPTKVTRSALQNAASVSALLLTTEAVVADKPEPAAPAPMMDPSMGMGGMM.

Residues 29 to 32, 86 to 90, Gly-413, 476 to 478, and Asp-492 contribute to the ATP site; these read TLGP, DGTTT, and NAA.

The protein belongs to the chaperonin (HSP60) family. In terms of assembly, forms a cylinder of 14 subunits composed of two heptameric rings stacked back-to-back. Interacts with the co-chaperonin GroES.

It localises to the cytoplasm. It catalyses the reaction ATP + H2O + a folded polypeptide = ADP + phosphate + an unfolded polypeptide.. Functionally, together with its co-chaperonin GroES, plays an essential role in assisting protein folding. The GroEL-GroES system forms a nano-cage that allows encapsulation of the non-native substrate proteins and provides a physical environment optimized to promote and accelerate protein folding. This is Chaperonin GroEL from Enterococcus faecalis (strain ATCC 700802 / V583).